A 182-amino-acid polypeptide reads, in one-letter code: Ribosome-recycling factor (182 aa).

The protein belongs to the RRF family.

The protein localises to the cytoplasm. In terms of biological role, responsible for the release of ribosomes from messenger RNA at the termination of protein biosynthesis. May increase the efficiency of translation by recycling ribosomes from one round of translation to another. The protein is Ribosome-recycling factor of Picosynechococcus sp. (strain ATCC 27264 / PCC 7002 / PR-6) (Agmenellum quadruplicatum).